The primary structure comprises 416 residues: Acyl-coenzyme A amino acid N-acyltransferase 1 (416 aa).

Ser125 carries the phosphoserine modification. Residues Ser235, Asp325, and His359 each act as charge relay system in the active site. Ser414 carries the phosphoserine modification. A Microbody targeting signal motif is present at residues 414–416; the sequence is SKL.

Belongs to the C/M/P thioester hydrolase family. In terms of tissue distribution, expressed mainly in liver and kidney with low levels in adrenal and little or no expression in other tissues.

It localises to the peroxisome. It catalyses the reaction tetracosanoyl-CoA + taurine = N-tetracosanoyl-taurine + CoA + H(+). The enzyme catalyses eicosanoyl-CoA + taurine = N-eicosanoyl-taurine + CoA + H(+). It carries out the reaction taurine + octadecanoyl-CoA = N-octadecanoyl-taurine + CoA + H(+). The catalysed reaction is taurine + hexadecanoyl-CoA = N-hexadecanoyl-taurine + CoA + H(+). It catalyses the reaction tetradecanoyl-CoA + taurine = N-tetradecanoyl-taurine + CoA + H(+). The enzyme catalyses dodecanoyl-CoA + taurine = N-dodecanoyl-taurine + CoA + H(+). In terms of biological role, acyltransferase which efficiently conjugates very long-chain and long-chain fatty acids to taurine. Shows no conjugation activity in the presence of glycine. The sequence is that of Acyl-coenzyme A amino acid N-acyltransferase 1 from Mus musculus (Mouse).